We begin with the raw amino-acid sequence, 215 residues long: Chloramphenicol acetyltransferase (215 aa).

The Proton acceptor role is filled by histidine 189.

This sequence belongs to the chloramphenicol acetyltransferase family. Homotrimer.

It carries out the reaction chloramphenicol + acetyl-CoA = chloramphenicol 3-acetate + CoA. In terms of biological role, this enzyme is an effector of chloramphenicol resistance in bacteria. This Staphylococcus aureus protein is Chloramphenicol acetyltransferase (cat).